Consider the following 287-residue polypeptide: uncharacterized protein (287 aa).

GTP is bound by residues 43 to 50, 90 to 93, and 156 to 159; these read GKTGAGKS, DLPG, and DKAE. One can recognise a G domain in the interval 48 to 140; it reads GKSSLCNALF…TDEHFYRQVI (93 aa).

To E.coli YkfA and YeeP.

This is an uncharacterized protein from Escherichia coli (strain K12).